A 101-amino-acid chain; its full sequence is MRVIVFFDLPVITPENRHNYSVFRKYLIKSGFIMQQKSVYSKLVLNLTNRDSIVKSIEKNKPPEGLVEVLTVTEKQYAKMEIIIGESKTEYLNTDERLVVL.

D8 provides a ligand contact to Mg(2+).

This sequence belongs to the CRISPR-associated endoribonuclease Cas2 protein family. Homodimer, forms a heterotetramer with a Cas1 homodimer. Mg(2+) is required as a cofactor.

In terms of biological role, CRISPR (clustered regularly interspaced short palindromic repeat), is an adaptive immune system that provides protection against mobile genetic elements (viruses, transposable elements and conjugative plasmids). CRISPR clusters contain sequences complementary to antecedent mobile elements and target invading nucleic acids. CRISPR clusters are transcribed and processed into CRISPR RNA (crRNA). Functions as a ssRNA-specific endoribonuclease. Involved in the integration of spacer DNA into the CRISPR cassette. The protein is CRISPR-associated endoribonuclease Cas2 of Treponema denticola (strain ATCC 35405 / DSM 14222 / CIP 103919 / JCM 8153 / KCTC 15104).